The chain runs to 339 residues: Ketol-acid reductoisomerase (NADP(+)) (339 aa).

One can recognise a KARI N-terminal Rossmann domain in the interval 1–182 (MRVYYDRDAD…GGGRAGIIET (182 aa)). NADP(+) is bound by residues 24–27 (YGSQ), Arg48, Ser51, Ser53, and 83–86 (DELQ). His108 is a catalytic residue. Gly134 serves as a coordination point for NADP(+). Residues 183 to 328 (TFKEECETDL…ERLRAMMPWI (146 aa)) enclose the KARI C-terminal knotted domain. Residues Asp191, Glu195, Glu227, and Glu231 each coordinate Mg(2+). Ser252 contributes to the substrate binding site.

Belongs to the ketol-acid reductoisomerase family. It depends on Mg(2+) as a cofactor.

It catalyses the reaction (2R)-2,3-dihydroxy-3-methylbutanoate + NADP(+) = (2S)-2-acetolactate + NADPH + H(+). The enzyme catalyses (2R,3R)-2,3-dihydroxy-3-methylpentanoate + NADP(+) = (S)-2-ethyl-2-hydroxy-3-oxobutanoate + NADPH + H(+). Its pathway is amino-acid biosynthesis; L-isoleucine biosynthesis; L-isoleucine from 2-oxobutanoate: step 2/4. It functions in the pathway amino-acid biosynthesis; L-valine biosynthesis; L-valine from pyruvate: step 2/4. Its function is as follows. Involved in the biosynthesis of branched-chain amino acids (BCAA). Catalyzes an alkyl-migration followed by a ketol-acid reduction of (S)-2-acetolactate (S2AL) to yield (R)-2,3-dihydroxy-isovalerate. In the isomerase reaction, S2AL is rearranged via a Mg-dependent methyl migration to produce 3-hydroxy-3-methyl-2-ketobutyrate (HMKB). In the reductase reaction, this 2-ketoacid undergoes a metal-dependent reduction by NADPH to yield (R)-2,3-dihydroxy-isovalerate. The chain is Ketol-acid reductoisomerase (NADP(+)) from Methylobacterium nodulans (strain LMG 21967 / CNCM I-2342 / ORS 2060).